The sequence spans 349 residues: Fructose-1,6-bisphosphatase class 1 (349 aa).

Mg(2+)-binding residues include E92, D113, L115, and D116. Residues 116 to 119 (DGSS), N209, Y242, and K272 each bind substrate. E278 provides a ligand contact to Mg(2+).

The protein belongs to the FBPase class 1 family. Homotetramer. Mg(2+) serves as cofactor.

The protein resides in the cytoplasm. It carries out the reaction beta-D-fructose 1,6-bisphosphate + H2O = beta-D-fructose 6-phosphate + phosphate. Its pathway is carbohydrate biosynthesis; Calvin cycle. This is Fructose-1,6-bisphosphatase class 1 from Chloroherpeton thalassium (strain ATCC 35110 / GB-78).